Here is a 3546-residue protein sequence, read N- to C-terminus: Ubiquitin carboxyl-terminal hydrolase 34 (3546 aa).

4 positions are modified to phosphoserine: Ser352, Ser486, Ser487, and Ser490. 3 disordered regions span residues 502–535, 550–679, and 1459–1478; these read KEEE…SGGS, VQQR…VFNT, and TGSY…DQVE. Residues 511-524 are compositionally biased toward low complexity; it reads APSPWSPAASPQSS. Composition is skewed to polar residues over residues 525 to 534 and 560 to 570; these read DNSDTHQSGG and SMQGSSDETAN. Positions 571-590 are enriched in low complexity; it reads SGEDGSSGPGSSSGHSDGSS. Residues 591–609 show a composition bias toward polar residues; sequence NEVNSSHASQSAGSPGSEV. A compositionally biased stretch (acidic residues) spans 610-627; sequence QSEDIADIEALKEEDEDD. A Phosphoserine modification is found at Ser649. The span at 659–671 shows a compositional bias: polar residues; the sequence is QGMSERNGTSSGT. Residues 1467 to 1477 show a composition bias toward acidic residues; that stretch reads PDSDDSSEDQV. At Ser1469 the chain carries Phosphoserine. One can recognise a USP domain in the interval 1894–2239; the sequence is VGLTNLGATC…SAYMLFYKRM (346 aa). The active-site Nucleophile is Cys1903. His2164 serves as the catalytic Proton acceptor. Phosphoserine is present on Ser2488. Residues 3331-3443 are disordered; sequence NSLQEQEAKE…HAEEQSNNGR (113 aa). The span at 3336 to 3347 shows a compositional bias: basic and acidic residues; the sequence is QEAKERKTKDDE. Residues Ser3358 and Ser3359 each carry the phosphoserine modification. The residue at position 3381 (Thr3381) is a Phosphothreonine. Phosphoserine occurs at positions 3386 and 3406. The segment covering 3421-3432 has biased composition (polar residues); it reads SSFSEDMSNIRS. Residues 3433-3443 are compositionally biased toward basic and acidic residues; it reads QHAEEQSNNGR. At Ser3503 the chain carries Phosphoserine.

The protein belongs to the peptidase C19 family. In terms of assembly, interacts with AXIN1 and AXIN2. As to expression, expressed in brain at low level.

It carries out the reaction Thiol-dependent hydrolysis of ester, thioester, amide, peptide and isopeptide bonds formed by the C-terminal Gly of ubiquitin (a 76-residue protein attached to proteins as an intracellular targeting signal).. In terms of biological role, ubiquitin hydrolase that can remove conjugated ubiquitin from AXIN1 and AXIN2, thereby acting as a regulator of Wnt signaling pathway. Acts as an activator of the Wnt signaling pathway downstream of the beta-catenin destruction complex by deubiquitinating and stabilizing AXIN1 and AXIN2, leading to promote nuclear accumulation of AXIN1 and AXIN2 and positively regulate beta-catenin (CTNBB1)-mediated transcription. Recognizes and hydrolyzes the peptide bond at the C-terminal Gly of ubiquitin. Involved in the processing of poly-ubiquitin precursors as well as that of ubiquitinated proteins. This Homo sapiens (Human) protein is Ubiquitin carboxyl-terminal hydrolase 34 (USP34).